A 1249-amino-acid polypeptide reads, in one-letter code: Hyphally regulated cell wall protein 3 (1249 aa).

The signal sequence occupies residues Met-1–Ala-20. Asn-373 carries N-linked (GlcNAc...) asparagine glycosylation. Residues Phe-383–Thr-415 show a composition bias toward low complexity. Disordered regions lie at residues Phe-383–Ile-729 and Gly-883–Ser-1217. The segment covering Gly-416–Tyr-428 has biased composition (polar residues). Low complexity predominate over residues Ser-429–Thr-716. Asn-681 carries an N-linked (GlcNAc...) asparagine glycan. Composition is skewed to polar residues over residues Asn-717–Ile-729 and Gly-883–Thr-935. N-linked (GlcNAc...) asparagine glycosylation is found at Asn-891, Asn-940, Asn-944, Asn-948, Asn-952, Asn-956, Asn-960, Asn-966, Asn-970, Asn-974, Asn-984, Asn-988, Asn-992, Asn-996, Asn-1000, Asn-1010, Asn-1014, Asn-1018, Asn-1022, Asn-1026, Asn-1032, Asn-1046, Asn-1050, Asn-1058, Asn-1062, Asn-1072, Asn-1076, Asn-1080, Asn-1086, Asn-1090, Asn-1094, Asn-1098, Asn-1114, Asn-1118, Asn-1122, Asn-1128, Asn-1132, Asn-1136, Asn-1140, Asn-1150, Asn-1154, Asn-1158, Asn-1172, Asn-1180, and Asn-1186. Residues Gly-941–Asn-959 show a composition bias toward low complexity. The span at Asn-960–Phe-982 shows a compositional bias: gly residues. The span at Asn-983–Gly-1043 shows a compositional bias: low complexity. The span at Asn-1062 to Ser-1078 shows a compositional bias: gly residues. A compositionally biased stretch (low complexity) spans Asp-1079 to Asn-1097. Over residues Asn-1139–Val-1167 the composition is skewed to low complexity. Composition is skewed to low complexity over residues Asn-1175–Ala-1194 and Ser-1205–Ser-1217. Residue Asn-1225 is glycosylated (N-linked (GlcNAc...) asparagine). Asn-1225 carries the GPI-anchor amidated asparagine lipid modification. A propeptide spans Gly-1226–Leu-1249 (removed in mature form).

The protein belongs to the HYR1/IFF family. In terms of processing, the GPI-anchor is attached to the protein in the endoplasmic reticulum and serves to target the protein to the cell surface. There, the glucosamine-inositol phospholipid moiety is cleaved off and the GPI-modified mannoprotein is covalently attached via its lipidless GPI glycan remnant to the 1,6-beta-glucan of the outer cell wall layer.

Its subcellular location is the secreted. It is found in the cell wall. The protein localises to the membrane. Functionally, GPI-anchored cell wall protein involved in cell wall organization, hyphal growth, as well as in host-fungal interaction and virulence. The sequence is that of Hyphally regulated cell wall protein 3 (HYR3) from Candida albicans (strain SC5314 / ATCC MYA-2876) (Yeast).